A 562-amino-acid chain; its full sequence is Nucleoprotein (562 aa).

Residues 53–238 (MRRDKRDESD…ITQEESQINI (186 aa)) are binding site for the cap structure m7GTP. 2 residues coordinate Mn(2+): aspartate 381 and glutamate 383. Residues glutamate 391, cysteine 498, histidine 501, and cysteine 522 each coordinate Zn(2+). Mn(2+) is bound at residue aspartate 526.

It belongs to the arenaviridae nucleocapsid protein family. As to quaternary structure, homomultimerizes to form the nucleocapsid. Binds to viral genomic RNA. Interacts with glycoprotein G2. Interacts with protein Z; this interaction probably directs the encapsidated genome to budding sites. Interacts with protein L; this interaction does not interfere with Z-L interaction. Interacts with host IKBKE (via Protein kinase domain); the interaction inhibits IKBKE kinase activity.

Its subcellular location is the virion. It is found in the host cytoplasm. Its function is as follows. Encapsidates the genome, protecting it from nucleases. The encapsidated genomic RNA is termed the nucleocapsid (NC). Serves as template for viral transcription and replication. The increased presence of protein N in host cell does not seem to trigger the switch from transcription to replication as observed in other negative strain RNA viruses. Through the interaction with host IKBKE, strongly inhibits the phosphorylation and nuclear translocation of host IRF3, a protein involved in interferon activation pathway, leading to the inhibition of interferon-beta and IRF3-dependent promoters activation. Also encodes a functional 3'-5' exoribonuclease that degrades preferentially dsRNA substrates and thereby participates in the suppression of interferon induction. This chain is Nucleoprotein, found in Bear Canyon mammarenavirus (isolate Mouse/United States/AV A0070039/2000) (BCNV).